A 149-amino-acid polypeptide reads, in one-letter code: 1,4-dihydroxy-2-naphthoyl-CoA hydrolase (149 aa).

Asp-19 is an active-site residue.

Belongs to the 4-hydroxybenzoyl-CoA thioesterase family. DHNA-CoA hydrolase subfamily.

The enzyme catalyses 1,4-dihydroxy-2-naphthoyl-CoA + H2O = 1,4-dihydroxy-2-naphthoate + CoA + H(+). The protein operates within cofactor biosynthesis; phylloquinone biosynthesis. It functions in the pathway quinol/quinone metabolism; 1,4-dihydroxy-2-naphthoate biosynthesis; 1,4-dihydroxy-2-naphthoate from chorismate: step 7/7. Its function is as follows. Catalyzes the hydrolysis of 1,4-dihydroxy-2-naphthoyl-CoA (DHNA-CoA) to 1,4-dihydroxy-2-naphthoate (DHNA), a reaction involved in phylloquinone (vitamin K1) biosynthesis. This chain is 1,4-dihydroxy-2-naphthoyl-CoA hydrolase, found in Synechococcus sp. (strain CC9605).